The chain runs to 333 residues: Holliday junction branch migration complex subunit RuvB (333 aa).

Residues 1–182 (MTNRILDMEQ…FGITGHMEYY (182 aa)) are large ATPase domain (RuvB-L). ATP contacts are provided by residues Leu21, Arg22, Gly63, Lys66, Thr67, Thr68, 129–131 (EDF), Arg172, Tyr182, and Arg219. Thr67 provides a ligand contact to Mg(2+). The segment at 183–253 (ELADLTEIVE…ITDKALTMLD (71 aa)) is small ATPAse domain (RuvB-S). The segment at 256–333 (REGLDYVDQK…EHLGYPYTEK (78 aa)) is head domain (RuvB-H). 4 residues coordinate DNA: Arg292, Arg311, Arg313, and Arg316.

The protein belongs to the RuvB family. In terms of assembly, homohexamer. Forms an RuvA(8)-RuvB(12)-Holliday junction (HJ) complex. HJ DNA is sandwiched between 2 RuvA tetramers; dsDNA enters through RuvA and exits via RuvB. An RuvB hexamer assembles on each DNA strand where it exits the tetramer. Each RuvB hexamer is contacted by two RuvA subunits (via domain III) on 2 adjacent RuvB subunits; this complex drives branch migration. In the full resolvosome a probable DNA-RuvA(4)-RuvB(12)-RuvC(2) complex forms which resolves the HJ.

Its subcellular location is the cytoplasm. It catalyses the reaction ATP + H2O = ADP + phosphate + H(+). Functionally, the RuvA-RuvB-RuvC complex processes Holliday junction (HJ) DNA during genetic recombination and DNA repair, while the RuvA-RuvB complex plays an important role in the rescue of blocked DNA replication forks via replication fork reversal (RFR). RuvA specifically binds to HJ cruciform DNA, conferring on it an open structure. The RuvB hexamer acts as an ATP-dependent pump, pulling dsDNA into and through the RuvAB complex. RuvB forms 2 homohexamers on either side of HJ DNA bound by 1 or 2 RuvA tetramers; 4 subunits per hexamer contact DNA at a time. Coordinated motions by a converter formed by DNA-disengaged RuvB subunits stimulates ATP hydrolysis and nucleotide exchange. Immobilization of the converter enables RuvB to convert the ATP-contained energy into a lever motion, pulling 2 nucleotides of DNA out of the RuvA tetramer per ATP hydrolyzed, thus driving DNA branch migration. The RuvB motors rotate together with the DNA substrate, which together with the progressing nucleotide cycle form the mechanistic basis for DNA recombination by continuous HJ branch migration. Branch migration allows RuvC to scan DNA until it finds its consensus sequence, where it cleaves and resolves cruciform DNA. The chain is Holliday junction branch migration complex subunit RuvB from Streptococcus suis (strain 98HAH33).